The following is a 570-amino-acid chain: Protein misato homolog 1 (570 aa).

Position 495 is a phosphoserine (serine 495).

Belongs to the misato family. As to expression, present in all cell lines tested (at protein level). Widely expressed.

The protein localises to the mitochondrion outer membrane. The protein resides in the cytoplasm. Its function is as follows. Involved in the regulation of mitochondrial distribution and morphology. Required for mitochondrial fusion and mitochondrial network formation. This Homo sapiens (Human) protein is Protein misato homolog 1 (MSTO1).